We begin with the raw amino-acid sequence, 220 residues long: Large ribosomal subunit protein bL21c (220 aa).

Belongs to the bacterial ribosomal protein bL21 family. Part of the 50S ribosomal subunit.

The protein resides in the plastid. It is found in the chloroplast. In terms of biological role, this protein binds to 23S ribosomal RNA in the presence of protein L20. This Arabidopsis thaliana (Mouse-ear cress) protein is Large ribosomal subunit protein bL21c (RPL21).